The primary structure comprises 496 residues: L-arabinose isomerase (496 aa).

Mn(2+) contacts are provided by Glu-306, Glu-331, His-348, and His-447.

Belongs to the arabinose isomerase family. Mn(2+) is required as a cofactor.

It carries out the reaction beta-L-arabinopyranose = L-ribulose. It participates in carbohydrate degradation; L-arabinose degradation via L-ribulose; D-xylulose 5-phosphate from L-arabinose (bacterial route): step 1/3. Catalyzes the conversion of L-arabinose to L-ribulose. In Geobacillus thermodenitrificans (strain NG80-2), this protein is L-arabinose isomerase.